A 96-amino-acid polypeptide reads, in one-letter code: Co-chaperonin GroES (96 aa).

This sequence belongs to the GroES chaperonin family. In terms of assembly, heptamer of 7 subunits arranged in a ring. Interacts with the chaperonin GroEL.

Its subcellular location is the cytoplasm. In terms of biological role, together with the chaperonin GroEL, plays an essential role in assisting protein folding. The GroEL-GroES system forms a nano-cage that allows encapsulation of the non-native substrate proteins and provides a physical environment optimized to promote and accelerate protein folding. GroES binds to the apical surface of the GroEL ring, thereby capping the opening of the GroEL channel. The protein is Co-chaperonin GroES of Buchnera aphidicola subsp. Acyrthosiphon pisum (strain 5A).